Here is a 548-residue protein sequence, read N- to C-terminus: Lysine--tRNA ligase (548 aa).

A 'HIGH' region motif is present at residues 43–51; the sequence is PSGVPHLGN. The 'KMSKS' region signature appears at 308–312; it reads PFSSS.

The protein belongs to the class-I aminoacyl-tRNA synthetase family.

The protein localises to the cytoplasm. It catalyses the reaction tRNA(Lys) + L-lysine + ATP = L-lysyl-tRNA(Lys) + AMP + diphosphate. The protein is Lysine--tRNA ligase of Halobacterium salinarum (strain ATCC 700922 / JCM 11081 / NRC-1) (Halobacterium halobium).